Reading from the N-terminus, the 77-residue chain is Probable small nuclear ribonucleoprotein G (77 aa).

Residues 4–76 (THPPELKKYM…VVIMEPKERI (73 aa)) enclose the Sm domain.

Belongs to the snRNP Sm proteins family. In terms of assembly, core component of the spliceosomal U1, U2, U4 and U5 small nuclear ribonucleoproteins (snRNPs), the building blocks of the spliceosome.

The protein localises to the cytoplasm. The protein resides in the cytosol. It localises to the nucleus. Its function is as follows. Plays a role in pre-mRNA splicing as a core component of the spliceosomal U1, U2, U4 and U5 small nuclear ribonucleoproteins (snRNPs), the building blocks of the spliceosome. This Caenorhabditis elegans protein is Probable small nuclear ribonucleoprotein G (snr-7).